The chain runs to 224 residues: Uracil-DNA glycosylase 2 (224 aa).

Residue Asp64 is the Proton acceptor of the active site.

The protein belongs to the uracil-DNA glycosylase (UDG) superfamily. UNG family.

It localises to the cytoplasm. The enzyme catalyses Hydrolyzes single-stranded DNA or mismatched double-stranded DNA and polynucleotides, releasing free uracil.. Excises uracil residues from the DNA which can arise as a result of misincorporation of dUMP residues by DNA polymerase or due to deamination of cytosine. The protein is Uracil-DNA glycosylase 2 of Listeria monocytogenes serovar 1/2a (strain ATCC BAA-679 / EGD-e).